The chain runs to 606 residues: NADH-ubiquinone oxidoreductase chain 5 (606 aa).

16 helical membrane-spanning segments follow: residues 4–24, 38–58, 87–107, 117–137, 140–160, 171–191, 211–233, 241–261, 273–293, 301–320, 325–347, 366–386, 413–433, 457–477, 488–508, and 584–604; these read FSSL…SSIL, NIIS…IHSG, MIFV…SLWY, FFKY…ANNL, LFIG…WWYG, AILY…WFLF, LPLL…HPWL, TPVS…FLLI, IQSL…ICAL, IIAF…IGIN, AFLH…GSII, MPFT…MPFL, LIAT…ALLG, LLIG…PTTI, LTAL…SLIT, and IKLY…LFNL.

It belongs to the complex I subunit 5 family. As to quaternary structure, core subunit of respiratory chain NADH dehydrogenase (Complex I) which is composed of 45 different subunits.

Its subcellular location is the mitochondrion inner membrane. It carries out the reaction a ubiquinone + NADH + 5 H(+)(in) = a ubiquinol + NAD(+) + 4 H(+)(out). Core subunit of the mitochondrial membrane respiratory chain NADH dehydrogenase (Complex I) which catalyzes electron transfer from NADH through the respiratory chain, using ubiquinone as an electron acceptor. Essential for the catalytic activity and assembly of complex I. The chain is NADH-ubiquinone oxidoreductase chain 5 (MT-ND5) from Equus asinus (Donkey).